A 599-amino-acid chain; its full sequence is Beta-myrcene synthase, chloroplastic (599 aa).

The N-terminal 34 residues, M1–V34, are a transit peptide targeting the chloroplast. Mg(2+)-binding residues include D352, D356, D496, T500, and E504. The DDXXD motif signature appears at D352–D356.

This sequence belongs to the terpene synthase family. Mg(2+) serves as cofactor. The cofactor is Mn(2+).

It is found in the plastid. Its subcellular location is the chloroplast. It catalyses the reaction (2E)-geranyl diphosphate = beta-myrcene + diphosphate. Its pathway is secondary metabolite biosynthesis; terpenoid biosynthesis. Functionally, monoterpene synthase that catalyzes the formation of beta-myrcene from geranyl diphosphate. In Ocimum basilicum (Sweet basil), this protein is Beta-myrcene synthase, chloroplastic (MYS).